The sequence spans 88 residues: Long neurotoxin LNTX-2 (88 aa).

An N-terminal signal peptide occupies residues 1-21; it reads MKTLLLTLVVVTIVCLDFGYA. 4 disulfide bridges follow: Cys24–Cys42, Cys35–Cys63, Cys67–Cys78, and Cys79–Cys84.

Belongs to the three-finger toxin family. Long-chain subfamily. Type II alpha-neurotoxin sub-subfamily. As to expression, expressed by the venom gland.

It is found in the secreted. Functionally, binds with high affinity to muscular nicotinic acetylcholine receptors (nAChRs), whereas it binds with a low affinity to neuronal alpha-7/CHRNA7 nAChRs. This chain is Long neurotoxin LNTX-2, found in Demansia vestigiata (Lesser black whip snake).